A 97-amino-acid chain; its full sequence is UPF0147 protein MA_0092 (97 aa).

It belongs to the UPF0147 family.

This chain is UPF0147 protein MA_0092, found in Methanosarcina acetivorans (strain ATCC 35395 / DSM 2834 / JCM 12185 / C2A).